Consider the following 163-residue polypeptide: NADH-quinone oxidoreductase subunit I (163 aa).

4Fe-4S ferredoxin-type domains are found at residues 53–83 and 94–123; these read LRRY…IEAG and VRYD…EGPN. [4Fe-4S] cluster contacts are provided by Cys-63, Cys-66, Cys-69, Cys-73, Cys-103, Cys-106, Cys-109, and Cys-113.

This sequence belongs to the complex I 23 kDa subunit family. NDH-1 is composed of 14 different subunits. Subunits NuoA, H, J, K, L, M, N constitute the membrane sector of the complex. It depends on [4Fe-4S] cluster as a cofactor.

It localises to the cell inner membrane. It catalyses the reaction a quinone + NADH + 5 H(+)(in) = a quinol + NAD(+) + 4 H(+)(out). In terms of biological role, NDH-1 shuttles electrons from NADH, via FMN and iron-sulfur (Fe-S) centers, to quinones in the respiratory chain. The immediate electron acceptor for the enzyme in this species is believed to be ubiquinone. Couples the redox reaction to proton translocation (for every two electrons transferred, four hydrogen ions are translocated across the cytoplasmic membrane), and thus conserves the redox energy in a proton gradient. The chain is NADH-quinone oxidoreductase subunit I from Bartonella bacilliformis (strain ATCC 35685 / KC583 / Herrer 020/F12,63).